The chain runs to 148 residues: Protein SprT-like (148 aa).

One can recognise a SprT-like domain in the interval 6–147; that stretch reads LQQLVATISM…CGRCQGPIKL (142 aa). Zn(2+) is bound at residue H67. E68 is a catalytic residue. H71 lines the Zn(2+) pocket.

It belongs to the SprT family. Zn(2+) is required as a cofactor.

The protein resides in the cytoplasm. The chain is Protein SprT-like from Lactiplantibacillus plantarum (strain ATCC BAA-793 / NCIMB 8826 / WCFS1) (Lactobacillus plantarum).